The sequence spans 178 residues: N-alpha-acetyltransferase 20 (178 aa).

The N-acetyltransferase domain maps to 2-157 (TSLRPFTCDD…DAYDMRKALS (156 aa)). The interval 159–178 (DTEKKSIVPLPHPVRPEDIE) is disordered.

The protein belongs to the acetyltransferase family. ARD1 subfamily. Component of the N-terminal acetyltransferase B (NatB) complex which is composed of naa20 and naa25.

The protein resides in the cytoplasm. Its subcellular location is the nucleus. It catalyses the reaction N-terminal L-methionyl-L-asparaginyl-[protein] + acetyl-CoA = N-terminal N(alpha)-acetyl-L-methionyl-L-asparaginyl-[protein] + CoA + H(+). The catalysed reaction is N-terminal L-methionyl-L-glutaminyl-[protein] + acetyl-CoA = N-terminal N(alpha)-acetyl-L-methionyl-L-glutaminyl-[protein] + CoA + H(+). It carries out the reaction N-terminal L-methionyl-L-aspartyl-[protein] + acetyl-CoA = N-terminal N(alpha)-acetyl-L-methionyl-L-aspartyl-[protein] + CoA + H(+). The enzyme catalyses N-terminal L-methionyl-L-glutamyl-[protein] + acetyl-CoA = N-terminal N(alpha)-acetyl-L-methionyl-L-glutamyl-[protein] + CoA + H(+). Functionally, catalytic subunit of the NatB complex which catalyzes acetylation of the N-terminal methionine residues of peptides beginning with Met-Asp, Met-Glu, Met-Asn and Met-Gln. Proteins with cell cycle functions are overrepresented in the pool of NatB substrates. Required for maintaining the structure and function of actomyosin fibers and for proper cellular migration. The sequence is that of N-alpha-acetyltransferase 20 (naa20) from Xenopus tropicalis (Western clawed frog).